The primary structure comprises 393 residues: Lipid-A-disaccharide synthase (393 aa).

The protein belongs to the LpxB family.

It carries out the reaction a lipid X + a UDP-2-N,3-O-bis[(3R)-3-hydroxyacyl]-alpha-D-glucosamine = a lipid A disaccharide + UDP + H(+). Its pathway is bacterial outer membrane biogenesis; LPS lipid A biosynthesis. Functionally, condensation of UDP-2,3-diacylglucosamine and 2,3-diacylglucosamine-1-phosphate to form lipid A disaccharide, a precursor of lipid A, a phosphorylated glycolipid that anchors the lipopolysaccharide to the outer membrane of the cell. The polypeptide is Lipid-A-disaccharide synthase (Granulibacter bethesdensis (strain ATCC BAA-1260 / CGDNIH1)).